Consider the following 635-residue polypeptide: Transcription termination factor FttA (635 aa).

KHa stretches follow at residues 1–69 (MSAE…PSVL) and 4–69 (EDIL…PSVL). A KHb region spans residues 70–137 (VEPDIAKDKI…WAPKPVRTPP (68 aa)). Metallo-beta-lactamase N-terminus regions lie at residues 179–382 (WVRT…YGGY) and 179–383 (WVRT…GGYD). 2 beta-Casp regions span residues 180-577 (VRTS…GFSG) and 383-576 (DDVL…EGFS). Zn(2+) contacts are provided by His241, His243, Asp245, His246, His328, and Asp351. 2 metallo-beta-lactamase C-terminus regions span residues 577–635 (GHSD…IRLR) and 578–635 (HSDR…IRLR). His602 lines the Zn(2+) pocket.

Belongs to the metallo-beta-lactamase superfamily. RNA-metabolizing metallo-beta-lactamase-like family. FttA subfamily. As to quaternary structure, homodimer. Interacts with RNA polymerase (RNAP); interaction is not dependent on DNA or RNA. Interacts with the Spt4-Spt5 complex. The cofactor is Zn(2+).

The protein resides in the chromosome. Terminates transcription on the whole genome. Termination is linked to FttA-mediated RNA cleavage and does not require NTP hydrolysis. Cleaves endonucleolytically at the RNA exit channel of RNA polymerase (RNAP); the 5'-3' exonuclease activity of this protein degrades the nascent RNA released from RNAP. Its function is as follows. Terminates transcription genome-wide. Transcription termination is most effective in vivo on RNAs with more than one U4-tract in their 3'-ends (including non-protein coding RNAs); U4-tracts are recognized by this protein. Also plays a role in termination of RNAs without U-tracts by an unknown mechanism. Has endonuclease activity after U-rich tracts in transcription termination sites. Binds RNA at U4-tracts found directly upstream of the experimentally determined transcription termination sites; binds preferentially to RNAs with more U4-tracts at their 3'-ends. The sequence is that of Transcription termination factor FttA from Methanococcus maripaludis (strain DSM 14266 / JCM 13030 / NBRC 101832 / S2 / LL).